A 29-amino-acid chain; its full sequence is Cytochrome b6-f complex subunit 8 (29 aa).

A helical transmembrane segment spans residues 3-23 (IVSLAWAALMVVFTFSLSLVV).

Belongs to the PetN family. As to quaternary structure, the 4 large subunits of the cytochrome b6-f complex are cytochrome b6, subunit IV (17 kDa polypeptide, PetD), cytochrome f and the Rieske protein, while the 4 small subunits are PetG, PetL, PetM and PetN. The complex functions as a dimer.

The protein localises to the plastid. Its subcellular location is the chloroplast thylakoid membrane. In terms of biological role, component of the cytochrome b6-f complex, which mediates electron transfer between photosystem II (PSII) and photosystem I (PSI), cyclic electron flow around PSI, and state transitions. The sequence is that of Cytochrome b6-f complex subunit 8 from Solanum bulbocastanum (Wild potato).